Reading from the N-terminus, the 565-residue chain is Probable serine/threonine-protein kinase abkA (565 aa).

Residues 44–77 (NNNNISLKDKFKDLKDLKDNLNEKKINNDNDDDD) adopt a coiled-coil conformation. The 335-residue stretch at 231-565 (LFQDDPIAAA…FKNIFYKNYK (335 aa)) folds into the Protein kinase domain. ATP-binding positions include 237-245 (IAAASIGQV) and Lys-259. The active-site Proton acceptor is Asp-401.

The protein belongs to the protein kinase superfamily. ADCK protein kinase family.

The sequence is that of Probable serine/threonine-protein kinase abkA (abkA) from Dictyostelium discoideum (Social amoeba).